The sequence spans 184 residues: Photosystem I assembly protein Ycf4 (184 aa).

The next 2 helical transmembrane spans lie at 19 to 39 (ISNF…LLVG) and 57 to 77 (IVFF…LFIS).

The protein belongs to the Ycf4 family.

Its subcellular location is the plastid. It localises to the chloroplast thylakoid membrane. Its function is as follows. Seems to be required for the assembly of the photosystem I complex. In Atropa belladonna (Belladonna), this protein is Photosystem I assembly protein Ycf4.